The sequence spans 379 residues: Probable pectin lyase B (379 aa).

Positions 1-20 are cleaved as a signal peptide; the sequence is MHYKLLFAAAAASLASAVSA. Intrachain disulfides connect Cys83–Cys102 and Cys92–Cys226. 2 N-linked (GlcNAc...) asparagine glycosylation sites follow: Asn129 and Asn252. Residue Arg256 is part of the active site. Cysteines 323 and 331 form a disulfide.

This sequence belongs to the polysaccharide lyase 1 family.

The protein resides in the secreted. It carries out the reaction Eliminative cleavage of (1-&gt;4)-alpha-D-galacturonan methyl ester to give oligosaccharides with 4-deoxy-6-O-methyl-alpha-D-galact-4-enuronosyl groups at their non-reducing ends.. Its function is as follows. Pectinolytic enzymes consist of four classes of enzymes: pectin lyase, polygalacturonase, pectin methylesterase and rhamnogalacturonase. Among pectinolytic enzymes, pectin lyase is the most important in depolymerization of pectin, since it cleaves internal glycosidic bonds of highly methylated pectins. This Aspergillus niger (strain ATCC MYA-4892 / CBS 513.88 / FGSC A1513) protein is Probable pectin lyase B (pelB).